A 4134-amino-acid polypeptide reads, in one-letter code: DNA-dependent protein kinase catalytic subunit (4134 aa).

HEAT repeat units follow at residues 900–937, 1000–1036, and 1050–1085; these read VIYL…VAYM, QDTV…LKWS, and ANTK…YREF. 2 TPR repeats span residues 1265-1305 and 1722-1755; these read YNTF…HDIH and PMSS…SQSP. Ser2055 carries the post-translational modification Phosphoserine; by autocatalysis. The TPR 3 repeat unit spans residues 2207-2240; it reads DEILANRLLEFLMKNAFHQKRAVFRHNLEIIKTV. Thr2609 carries the phosphothreonine; by autocatalysis modification. A compositionally biased stretch (polar residues) spans 2611–2629; sequence ASQSTNRNSSQERSLSISG. Positions 2611–2631 are disordered; sequence ASQSTNRNSSQERSLSISGSV. Residue Ser2612 is modified to Phosphoserine; by autocatalysis. Phosphothreonine; by autocatalysis occurs at positions 2638 and 2647. Positions 2880–3545 constitute an FAT domain; sequence NVSTSCLASL…IYPFTISSES (666 aa). A PI3K/PI4K catalytic domain is found at 3728–4059; sequence FDERIMVLES…VSYVKRKLTG (332 aa). A G-loop region spans residues 3734-3740; that stretch reads VLESLRK. Residues 3925–3933 are catalytic loop; the sequence is GIGDRHLSN. An activation loop region spans residues 3945–3970; it reads GIDFGHAFGSATQFLPVPELMPFRLT. The region spanning 4102 to 4134 is the FATC domain; that stretch reads DRLSEETQVRCLIDQATDPNLLGRVWEGWEPWM.

The protein belongs to the PI3/PI4-kinase family. DNA-PK is a heterotrimer of PRKDC and the Ku dimer (composed of XRCC6/Ku70 and XRCC5/Ku86). Component of the core long-range non-homologous end joining (NHEJ) complex (also named DNA-PK complex) composed of PRKDC, LIG4, XRCC4, XRCC6/Ku70, XRCC5/Ku86 and NHEJ1/XLF. Additional component of the NHEJ complex includes PAXX. Following autophosphorylation, PRKDC dissociates from DNA. In terms of processing, autophosphorylated at two clusters, the T2609 cluster and the S2056 cluster. Autophosphorylated on Ser-2055, Thr-2609, Thr-2638 and Thr-2647. Ser-2055 and Thr-2609 are DNA damage-inducible phosphorylation sites (inducible with ionizing radiation, IR) dephosphorylated by PPP5C. Autophosphorylation induces a conformational change that leads to remodeling of the DNA-PK complex, requisite for efficient end processing and DNA repair. Autophosphorylation in trans within DNA-PK complexes loaded on DNA ends leads to the dissociation of PRKDC from DNA and the transition into the short-range NHEJ complex. Autophosphorylation of the T2609 cluster is required for hematopoietic development and protein synthesis in erythrocytes precursors.

Its subcellular location is the nucleus. It is found in the nucleolus. The enzyme catalyses L-seryl-[protein] + ATP = O-phospho-L-seryl-[protein] + ADP + H(+). It catalyses the reaction L-threonyl-[protein] + ATP = O-phospho-L-threonyl-[protein] + ADP + H(+). In terms of biological role, serine/threonine-protein kinase that acts as a molecular sensor for DNA damage. Involved in DNA nonhomologous end joining (NHEJ) required for double-strand break (DSB) repair and V(D)J recombination. Must be bound to DNA to express its catalytic properties. Promotes processing of hairpin DNA structures in V(D)J recombination by activation of the hairpin endonuclease artemis (DCLRE1C). Recruited by XRCC5 and XRCC6 to DNA ends and is required to (1) protect and align broken ends of DNA, thereby preventing their degradation, (2) and sequester the DSB for repair by NHEJ. Acts as a scaffold protein to aid the localization of DNA repair proteins to the site of damage. The assembly of the DNA-PK complex at DNA ends is also required for the NHEJ ligation step. Found at the ends of chromosomes, suggesting a further role in the maintenance of telomeric stability and the prevention of chromosomal end fusion. As part of the DNA-PK complex, involved in the early steps of ribosome assembly by promoting the processing of precursor rRNA into mature 18S rRNA in the small-subunit processome. Recognizes the substrate consensus sequence [ST]-Q. Phosphorylates 'Ser-139' of histone variant H2AX, thereby regulating DNA damage response mechanism. The protein is DNA-dependent protein kinase catalytic subunit (PRKDC) of Gallus gallus (Chicken).